Consider the following 162-residue polypeptide: CASP-like protein 1C2 (162 aa).

Residues 1-6 lie on the Cytoplasmic side of the membrane; that stretch reads MMKPKR. Residues 7–27 form a helical membrane-spanning segment; the sequence is LLSLLLRLIAVGATLAAVIIM. The Extracellular segment spans residues 28-49; sequence ATSHEKGTFFAVSYEAKYTDTP. The helical transmembrane segment at 50–70 threads the bilayer; that stretch reads AFKYFVIANAIVTVYGFLVLF. The Cytoplasmic portion of the chain corresponds to 71–79; that stretch reads HPPGSPLWR. The chain crosses the membrane as a helical span at residues 80 to 100; the sequence is LVLALDLVFTMLLISSISAAL. The Extracellular portion of the chain corresponds to 101–130; it reads AVAQVGKNGNSRAGWLPVCGQVTKYCNQVT. A helical membrane pass occupies residues 131 to 151; that stretch reads GALVAGLIALITYIILLLHSI. Residues 152 to 162 lie on the Cytoplasmic side of the membrane; that stretch reads YTFLNPLLEKA.

Belongs to the Casparian strip membrane proteins (CASP) family. Homodimer and heterodimers.

Its subcellular location is the cell membrane. This chain is CASP-like protein 1C2, found in Populus trichocarpa (Western balsam poplar).